We begin with the raw amino-acid sequence, 377 residues long: Presenilin-associated rhomboid-like protein, mitochondrial (377 aa).

A mitochondrion-targeting transit peptide spans 1–50; it reads MALYSWVQRGWRCGQTWAPLLGGGYRELSATQARQLLGRRFNLLLQQKCG. Residues 51–95 are Mitochondrial matrix-facing; sequence FRKAPRKVEPRRSDTGSSGEAYKRSALIPPLEETVFYPSPYPVRT. Residues S63 and S68 each carry the phosphoserine modification. Residues 96 to 116 traverse the membrane as a helical segment; it reads LLKPFFFTVGFTGCAFGSAAI. The Mitochondrial intermembrane portion of the chain corresponds to 117–165; sequence WQYESLKSRVQSYFDGIKADWLDSIRPQKEGNLRKEINKWWNSLSDGQR. A helical transmembrane segment spans residues 166–186; that stretch reads TVTGIIAANALVFCLWRVPSL. Residues 187–214 are Mitochondrial matrix-facing; the sequence is HRTMIRYFTSNPASKVLCSPMLLSTFSH. Residues 215–235 traverse the membrane as a helical segment; sequence FSLFHMAANMYVLWSFSTSIV. Residues 236–242 lie on the Mitochondrial intermembrane side of the membrane; sequence NILGQEQ. A helical membrane pass occupies residues 243-263; that stretch reads FVAVYLSAGVISNFVSYVCKV. At 264–268 the chain is on the mitochondrial matrix side; sequence ATGRY. Residues 269 to 289 traverse the membrane as a helical segment; it reads GPSLGASGAIMTVLAAVCTKI. The active-site Nucleophile is S275. Over 290 to 293 the chain is Mitochondrial intermembrane; the sequence is PEGR. A helical membrane pass occupies residues 294–314; the sequence is LAIIFLPVFTFTAGNALKAII. The Mitochondrial matrix portion of the chain corresponds to 315–331; sequence AMDTAGMILGWKFFDHA. The chain crosses the membrane as a helical span at residues 332–352; sequence AHLGGALFGIWYITYGHELIW. Residue H333 is part of the active site. The Mitochondrial intermembrane portion of the chain corresponds to 353-377; the sequence is KNREPLVKIWHEIRTNGPKKGGGSK.

The protein belongs to the peptidase S54 family. As to quaternary structure, interacts with PSEN1 and PSEN2. Binds OPA1. Post-translationally, P-beta is proteolytically processed (beta-cleavage) in a PARL-dependent manner.

The protein localises to the mitochondrion inner membrane. The protein resides in the nucleus. It catalyses the reaction Cleaves type-1 transmembrane domains using a catalytic dyad composed of serine and histidine that are contributed by different transmembrane domains.. Required for the control of apoptosis during postnatal growth. Essential for proteolytic processing of an antiapoptotic form of OPA1 which prevents the release of mitochondrial cytochrome c in response to intrinsic apoptotic signals. Required for the maturation of PINK1 into its 52kDa mature form after its cleavage by mitochondrial-processing peptidase (MPP). Promotes cleavage of serine/threonine-protein phosphatase PGAM5 in damaged mitochondria in response to loss of mitochondrial membrane potential. Mediates differential cleavage of PINK1 and PGAM5 depending on the health status of mitochondria, disassociating from PINK1 and associating with PGAM5 in response to mitochondrial membrane potential loss. Required for processing of CLPB into a form with higher protein disaggregase activity by removing an autoinhibitory N-terminal peptide. Promotes processing of DIABLO/SMAC in the mitochondrion which is required for DIABLO apoptotic activity. Also required for cleavage of STARD7 and TTC19. Promotes changes in mitochondria morphology regulated by phosphorylation of P-beta domain. This chain is Presenilin-associated rhomboid-like protein, mitochondrial, found in Rattus norvegicus (Rat).